Reading from the N-terminus, the 79-residue chain is Morintide mO1 (79 aa).

A signal peptide spans 1–20 (MAKLSFLSLFLLCLVATATA). A Chitin-binding type-1 domain is found at 21–63 (QNCGRQAGNRACANQLCCSQYGFCGSTSEYCSRANGCQSNCRG). Intrachain disulfides connect cysteine 23-cysteine 38, cysteine 32-cysteine 44, cysteine 37-cysteine 51, and cysteine 57-cysteine 61. Residues 64–79 (GGGADGAGGEAGGGGP) constitute a propeptide that is removed on maturation.

As to expression, leaves (at protein level).

Functionally, chitin-binding protein which functions in defense against chitin-containing fungal pathogens. Inhibits the growth of budding hyphae in A.alternata and A.brassiciola. The protein is Morintide mO1 of Moringa oleifera (Horseradish tree).